The chain runs to 129 residues: D-ribose pyranase 2 (129 aa).

The Proton donor role is filled by His20. Residues Asp28, His96, and 118–120 (YAN) contribute to the substrate site.

Belongs to the RbsD / FucU family. RbsD subfamily. In terms of assembly, homodecamer.

It is found in the cytoplasm. The catalysed reaction is beta-D-ribopyranose = beta-D-ribofuranose. It participates in carbohydrate metabolism; D-ribose degradation; D-ribose 5-phosphate from beta-D-ribopyranose: step 1/2. Its function is as follows. Catalyzes the interconversion of beta-pyran and beta-furan forms of D-ribose. The polypeptide is D-ribose pyranase 2 (Streptomyces griseus subsp. griseus (strain JCM 4626 / CBS 651.72 / NBRC 13350 / KCC S-0626 / ISP 5235)).